Consider the following 883-residue polypeptide: Phosphoenolpyruvate carboxylase (883 aa).

Residues His-138 and Lys-546 contribute to the active site.

The protein belongs to the PEPCase type 1 family. Mg(2+) is required as a cofactor.

It catalyses the reaction oxaloacetate + phosphate = phosphoenolpyruvate + hydrogencarbonate. Forms oxaloacetate, a four-carbon dicarboxylic acid source for the tricarboxylic acid cycle. This is Phosphoenolpyruvate carboxylase from Shigella flexneri.